The following is a 101-amino-acid chain: C-X-C motif chemokine 3 (101 aa).

The signal sequence occupies residues 1–32 (MAPPTRRLLNAALLLLLLLMATSHQPSGTVVA). 2 cysteine pairs are disulfide-bonded: cysteine 37–cysteine 63 and cysteine 39–cysteine 79.

This sequence belongs to the intercrine alpha (chemokine CxC) family.

It localises to the secreted. In terms of biological role, ligand for CXCR2. Has chemotactic activity for neutrophils. May play a role in inflammation and exert its effects on endothelial cells in an autocrine fashion. The sequence is that of C-X-C motif chemokine 3 (Cxcl3) from Rattus norvegicus (Rat).